Here is a 136-residue protein sequence, read N- to C-terminus: DUF35 domain-containing scaffold protein (136 aa).

The Zn(2+) site is built by Cys25, Cys38, and Cys41.

The protein belongs to the scaffold protein DUF35 family. As to quaternary structure, interacts with acetoacetyl-CoA thiolase and HMG-CoA synthase (HMGCS) that catalyzes the first and second step in the mevalonate pathway, respectively.

Functions as a scaffold to connect the acetoacetyl-CoA thiolase and HMG-CoA synthase (HMGCS) dimers in the channeling thiolase/HMGCS complex, which allows for efficient coupling of the endergonic thiolase reaction with the exergonic HMGCS reaction. This chain is DUF35 domain-containing scaffold protein, found in Pyrococcus furiosus (strain ATCC 43587 / DSM 3638 / JCM 8422 / Vc1).